A 221-amino-acid chain; its full sequence is Large ribosomal subunit protein uL16x (221 aa).

Belongs to the universal ribosomal protein uL16 family. Component of the small ribosomal subunit. Mature ribosomes consist of a small (40S) and a large (60S) subunit. The 40S subunit contains about 33 different proteins and 1 molecule of RNA (18S). The 60S subunit contains about 49 different proteins and 3 molecules of RNA (25S, 5.8S and 5S).

The sequence is that of Large ribosomal subunit protein uL16x (RPL10C) from Arabidopsis thaliana (Mouse-ear cress).